We begin with the raw amino-acid sequence, 496 residues long: Aspartyl/glutamyl-tRNA(Asn/Gln) amidotransferase subunit B (496 aa).

The protein belongs to the GatB/GatE family. GatB subfamily. Heterotrimer of A, B and C subunits.

It catalyses the reaction L-glutamyl-tRNA(Gln) + L-glutamine + ATP + H2O = L-glutaminyl-tRNA(Gln) + L-glutamate + ADP + phosphate + H(+). The enzyme catalyses L-aspartyl-tRNA(Asn) + L-glutamine + ATP + H2O = L-asparaginyl-tRNA(Asn) + L-glutamate + ADP + phosphate + 2 H(+). In terms of biological role, allows the formation of correctly charged Asn-tRNA(Asn) or Gln-tRNA(Gln) through the transamidation of misacylated Asp-tRNA(Asn) or Glu-tRNA(Gln) in organisms which lack either or both of asparaginyl-tRNA or glutaminyl-tRNA synthetases. The reaction takes place in the presence of glutamine and ATP through an activated phospho-Asp-tRNA(Asn) or phospho-Glu-tRNA(Gln). This is Aspartyl/glutamyl-tRNA(Asn/Gln) amidotransferase subunit B from Nitrosospira multiformis (strain ATCC 25196 / NCIMB 11849 / C 71).